The primary structure comprises 347 residues: Metacaspase-2 (347 aa).

The regulates substrate access to the active site stretch occupies residues 1–70 (MCSLITQLCD…QPWVATPLPG (70 aa)). His-158 is an active-site residue. Ca(2+)-binding residues include Asp-173, Asp-189, and Asp-190. Residue Cys-213 is part of the active site. Asp-220 contributes to the Ca(2+) binding site.

The protein belongs to the peptidase C14B family. In terms of assembly, monomer. Post-translationally, auto-proteolytic cleavage of the propeptide after Lys-55 and between the large and small subunits after Lys-268 is required for catalytic activity towards large protein substrates but is dispensable towards small oligopeptide substrates. After processing, the propeptide and the large and small subunits remain associated by non-covalent bonds. In vivo, the unprocessed enzyme appears to be the predominant form.

It is found in the recycling endosome. Its activity is regulated as follows. Activated by Ca(2+). In response to calcium binding, the 280-loop, the 280-loop, a disordered loop consisting of residues 269-275, undergoes a conformational change which stabilizes substrates in the active site. The binding to the substrate triggers the release of the N-terminal region resulting in the activation of the enzyme. Proteolytic cleavage is required for catalytic activity towards large protein substrates. In terms of biological role, cysteine protease that cleaves specifically after arginine or lysine residues. The polypeptide is Metacaspase-2 (Trypanosoma brucei brucei).